Reading from the N-terminus, the 192-residue chain is Adenylate kinase (192 aa).

10–15 (GAGKGT) is an ATP binding site. The segment at 30-59 (STGDMLREVIAKETEVGKKAKAIISSGALV) is NMP. AMP is bound by residues Thr-31, Arg-36, 57 to 59 (ALV), 85 to 88 (GYPR), and Gln-92. Residues 126–142 (RRVQETVAAGGQVRLDD) form an LID region. Arg-127 is an ATP binding site. Residues Arg-139 and Arg-150 each contribute to the AMP site. Ile-178 is a binding site for ATP.

It belongs to the adenylate kinase family. As to quaternary structure, monomer.

It localises to the cytoplasm. The enzyme catalyses AMP + ATP = 2 ADP. The protein operates within purine metabolism; AMP biosynthesis via salvage pathway; AMP from ADP: step 1/1. Its function is as follows. Catalyzes the reversible transfer of the terminal phosphate group between ATP and AMP. Plays an important role in cellular energy homeostasis and in adenine nucleotide metabolism. The chain is Adenylate kinase from Bartonella tribocorum (strain CIP 105476 / IBS 506).